A 500-amino-acid polypeptide reads, in one-letter code: Glycerol kinase (500 aa).

Thr-12 contributes to the ADP binding site. ATP-binding residues include Thr-12, Thr-13, and Ser-14. Thr-12 contacts sn-glycerol 3-phosphate. An ADP-binding site is contributed by Arg-16. The sn-glycerol 3-phosphate site is built by Arg-82, Glu-83, Tyr-134, and Asp-244. Positions 82, 83, 134, 244, and 245 each coordinate glycerol. Thr-266 and Gly-309 together coordinate ADP. Residues Thr-266, Gly-309, Gln-313, and Gly-410 each coordinate ATP. Gly-410 and Asn-414 together coordinate ADP.

The protein belongs to the FGGY kinase family. In terms of assembly, homotetramer and homodimer (in equilibrium).

The catalysed reaction is glycerol + ATP = sn-glycerol 3-phosphate + ADP + H(+). The protein operates within polyol metabolism; glycerol degradation via glycerol kinase pathway; sn-glycerol 3-phosphate from glycerol: step 1/1. Activated by phosphorylation and inhibited by fructose 1,6-bisphosphate (FBP). Its function is as follows. Key enzyme in the regulation of glycerol uptake and metabolism. Catalyzes the phosphorylation of glycerol to yield sn-glycerol 3-phosphate. The chain is Glycerol kinase from Alkaliphilus metalliredigens (strain QYMF).